The chain runs to 378 residues: Erythronate-4-phosphate dehydrogenase (378 aa).

Substrate-binding residues include serine 45 and threonine 66. 2 residues coordinate NAD(+): aspartate 146 and threonine 175. Residue arginine 208 is part of the active site. Aspartate 232 lines the NAD(+) pocket. Glutamate 237 is an active-site residue. Histidine 254 acts as the Proton donor in catalysis. Glycine 257 lines the NAD(+) pocket. Tyrosine 258 lines the substrate pocket.

It belongs to the D-isomer specific 2-hydroxyacid dehydrogenase family. PdxB subfamily. In terms of assembly, homodimer.

The protein resides in the cytoplasm. The enzyme catalyses 4-phospho-D-erythronate + NAD(+) = (R)-3-hydroxy-2-oxo-4-phosphooxybutanoate + NADH + H(+). The protein operates within cofactor biosynthesis; pyridoxine 5'-phosphate biosynthesis; pyridoxine 5'-phosphate from D-erythrose 4-phosphate: step 2/5. Catalyzes the oxidation of erythronate-4-phosphate to 3-hydroxy-2-oxo-4-phosphonooxybutanoate. The protein is Erythronate-4-phosphate dehydrogenase of Shigella boydii serotype 4 (strain Sb227).